Here is a 131-residue protein sequence, read N- to C-terminus: Small ribosomal subunit protein uS8 (131 aa).

Belongs to the universal ribosomal protein uS8 family. Part of the 30S ribosomal subunit. Contacts proteins S5 and S12.

Functionally, one of the primary rRNA binding proteins, it binds directly to 16S rRNA central domain where it helps coordinate assembly of the platform of the 30S subunit. The chain is Small ribosomal subunit protein uS8 from Erythrobacter litoralis (strain HTCC2594).